The following is a 92-amino-acid chain: Actobindin-A (92 aa).

Disordered stretches follow at residues 1-33 and 54-92; these read MSAPNPLLAEINKGADLKHTETQDKSAPKIGSD and LKHAETDDKSAPKINENTTIKPNNHSALLGEIKAKAADS. WH2 domains are found at residues 3–20 and 40–57; these read APNPLLAEINKGADLKHT and DHASLLSEVEQGAKLKHA. Basic and acidic residues-rich tracts occupy residues 13 to 33 and 54 to 64; these read KGADLKHTETQDKSAPKIGSD and LKHAETDDKSA. Residues 68–79 are compositionally biased toward polar residues; it reads NENTTIKPNNHS.

In terms of assembly, monomer.

Its function is as follows. Is able to bind two actin monomers at high concentrations of G-actin. Inhibits actin polymerization by sequestering G-actin and stabilizing actin dimers. This is Actobindin-A (abnA) from Dictyostelium discoideum (Social amoeba).